The chain runs to 310 residues: Vomeronasal type-1 receptor 50 (310 aa).

At 1-16 (MSKANLLHTDNNMKIT) the chain is on the extracellular side. A helical transmembrane segment spans residues 17–37 (LFSEVSVGISANSILFVVHLC). The Cytoplasmic segment spans residues 38–50 (KLLHENKPKPIDL). A helical transmembrane segment spans residues 51 to 71 (YIAFFSITQLMLLITMGLIAV). The Extracellular segment spans residues 72 to 93 (DMFMPWGRWDSTTCQSLIYLHR). A disulfide bridge connects residues C85 and C172. The helical transmembrane segment at 94–114 (LLRGLTFCATCLLNVLWTITL) threads the bilayer. At 115–134 (SPRSSCLTKFKHKSPHHISG) the chain is on the cytoplasmic side. The helical transmembrane segment at 135-155 (AFLFFCVLYMSFSSHLLVSII) threads the bilayer. Topologically, residues 156-193 (ATFNSTSDNFLYVTQSCSILPVSYSRTSILSTMMTMRE) are extracellular. Residue N159 is glycosylated (N-linked (GlcNAc...) asparagine). A helical transmembrane segment spans residues 194–214 (AFLIGLMALSSGYVVVLLWRH). Residues 215–237 (KKQARHLHSTSLSSKASPEQRAT) lie on the Cytoplasmic side of the membrane. A helical membrane pass occupies residues 238 to 258 (STIMLLMGFFVVLYILDTVIF). The Extracellular portion of the chain corresponds to 259–269 (QARLKFKDVST). A helical membrane pass occupies residues 270–290 (FFCVKIIISHSYATFSPFVFI). The Cytoplasmic portion of the chain corresponds to 291–310 (CNDKYMIKFVTSMCGRIVNV).

The protein belongs to the G-protein coupled receptor 1 family. In terms of tissue distribution, expressed in a subset of sensory neurons located in the apical layer of the vomeronasal organ.

It localises to the cell membrane. Functionally, putative pheromone receptor implicated in the regulation of social and reproductive behavior. This chain is Vomeronasal type-1 receptor 50 (Vmn1r50), found in Mus musculus (Mouse).